The following is a 527-amino-acid chain: NAD(P)H-quinone oxidoreductase chain 4 1 (527 aa).

A run of 14 helical transmembrane segments spans residues 5–25 (FPWL…LPII), 35–55 (WYSL…FCTG), 90–110 (LIIL…PVSF), 112–132 (PKLF…VFAV), 136–156 (LLFF…LSIW), 168–188 (FILY…TMAF), 211–231 (LLLY…FPLH), 242–262 (TAPA…YALL), 274–294 (AVFA…AALT), 310–330 (ISHM…GLSG), 331–351 (AVLQ…LVGA), 386–406 (LALP…GFAT), 416–436 (VLVI…LLSM), and 463–483 (VFII…PKIV).

It belongs to the complex I subunit 4 family.

It is found in the cellular thylakoid membrane. The enzyme catalyses a plastoquinone + NADH + (n+1) H(+)(in) = a plastoquinol + NAD(+) + n H(+)(out). It carries out the reaction a plastoquinone + NADPH + (n+1) H(+)(in) = a plastoquinol + NADP(+) + n H(+)(out). Functionally, NDH-1 shuttles electrons from NAD(P)H, via FMN and iron-sulfur (Fe-S) centers, to quinones in the respiratory chain. The immediate electron acceptor for the enzyme in this species is believed to be plastoquinone. Couples the redox reaction to proton translocation (for every two electrons transferred, four hydrogen ions are translocated across the cytoplasmic membrane), and thus conserves the redox energy in a proton gradient. The sequence is that of NAD(P)H-quinone oxidoreductase chain 4 1 from Trichodesmium erythraeum (strain IMS101).